We begin with the raw amino-acid sequence, 743 residues long: Acetyl-coenzyme A synthetase, chloroplastic/glyoxysomal (743 aa).

Residues 1–84 (MKIGSPSSPI…LNAVVLGESL (84 aa)) constitute a chloroplast transit peptide. Residue D613 is part of the active site.

The protein belongs to the ATP-dependent AMP-binding enzyme family. In terms of tissue distribution, expressed in leaves, flower buds and young flowers.

The protein resides in the plastid. It is found in the chloroplast. It localises to the glyoxysome. It carries out the reaction acetate + ATP + CoA = acetyl-CoA + AMP + diphosphate. In terms of biological role, catalyzes the production of acetyl-CoA, an activated form of acetate that can be used for lipid synthesis or for energy generation. May play a limited role in the biosynthesis of lipids. In Arabidopsis thaliana (Mouse-ear cress), this protein is Acetyl-coenzyme A synthetase, chloroplastic/glyoxysomal (ACS).